A 278-amino-acid polypeptide reads, in one-letter code: HTH-type transcriptional regulator HdfR (278 aa).

Residues 1–58 (MDTELLKTFLEVSRTRHFGRAAEALYLTQSAVSFRIRQLENQLGVNLFTRHRNNIRLT) form the HTH lysR-type domain. Positions 18–37 (FGRAAEALYLTQSAVSFRIR) form a DNA-binding region, H-T-H motif.

It belongs to the LysR transcriptional regulatory family.

In terms of biological role, negatively regulates the transcription of the flagellar master operon flhDC by binding to the upstream region of the operon. The chain is HTH-type transcriptional regulator HdfR from Salmonella agona (strain SL483).